Consider the following 536-residue polypeptide: DNA damage-binding protein CMR1 (536 aa).

A compositionally biased stretch (basic and acidic residues) spans 36-45 (REAGVDDTHR). The segment at 36 to 72 (REAGVDDTHRTVVKKKKSPSVSRGRSASPKVAPVATR) is disordered. WD repeat units follow at residues 195-236 (LVYE…LSEN), 251-291 (FFTK…SNDI), 346-386 (LSDK…KKPE), 403-442 (DSRL…LPDD), 456-495 (GRWT…LAHL), and 496-535 (PTAT…KEEE).

It belongs to the WD repeat DDB2/WDR76 family.

Functionally, DNA-binding protein that binds to both single- and double-stranded DNA. Binds preferentially to UV-damaged DNA. May be involved in DNA-metabolic processes. This is DNA damage-binding protein CMR1 from Vanderwaltozyma polyspora (strain ATCC 22028 / DSM 70294 / BCRC 21397 / CBS 2163 / NBRC 10782 / NRRL Y-8283 / UCD 57-17) (Kluyveromyces polysporus).